Here is a 475-residue protein sequence, read N- to C-terminus: LEC14B homolog (475 aa).

The interval 1 to 34 (MSYRTRFGKDNSACDSGNAVEGSGSSKGPNEVSN) is disordered. The segment covering 23–33 (SGSSKGPNEVS) has biased composition (polar residues). WD repeat units follow at residues 211–240 (DEFG…YVYD), 252–283 (AHSS…KVWD), 299–329 (GHLE…QLWD), 375–411 (GHGV…YIYD), and 423–453 (HHEG…ARWE).

This sequence belongs to the WD repeat LEC14B family.

The protein is LEC14B homolog of Prunus armeniaca (Apricot).